We begin with the raw amino-acid sequence, 277 residues long: Phosphonates import ATP-binding protein PhnC (277 aa).

The ABC transporter domain maps to 3-251 (IKLDKVSARH…RLQALYAQHL (249 aa)). An ATP-binding site is contributed by 40 to 47 (GPSGAGKT).

Belongs to the ABC transporter superfamily. Phosphonates importer (TC 3.A.1.9.1) family. The complex is composed of two ATP-binding proteins (PhnC), two transmembrane proteins (PhnE) and a solute-binding protein (PhnD).

It localises to the cell inner membrane. The enzyme catalyses phosphonate(out) + ATP + H2O = phosphonate(in) + ADP + phosphate + H(+). In terms of biological role, part of the ABC transporter complex PhnCDE involved in phosphonates import. Responsible for energy coupling to the transport system. The protein is Phosphonates import ATP-binding protein PhnC of Polaromonas sp. (strain JS666 / ATCC BAA-500).